The following is a 74-amino-acid chain: Protein SlyX homolog (74 aa).

Belongs to the SlyX family.

This is Protein SlyX homolog from Aliivibrio salmonicida (strain LFI1238) (Vibrio salmonicida (strain LFI1238)).